Here is a 1415-residue protein sequence, read N- to C-terminus: DNA-directed RNA polymerase subunit beta' (1415 aa).

Zn(2+) contacts are provided by C72, C74, C87, and C90. The Mg(2+) site is built by D463, D465, and D467. Residues C811, C885, C892, and C895 each contribute to the Zn(2+) site.

It belongs to the RNA polymerase beta' chain family. In terms of assembly, the RNAP catalytic core consists of 2 alpha, 1 beta, 1 beta' and 1 omega subunit. When a sigma factor is associated with the core the holoenzyme is formed, which can initiate transcription. It depends on Mg(2+) as a cofactor. Requires Zn(2+) as cofactor.

The catalysed reaction is RNA(n) + a ribonucleoside 5'-triphosphate = RNA(n+1) + diphosphate. Functionally, DNA-dependent RNA polymerase catalyzes the transcription of DNA into RNA using the four ribonucleoside triphosphates as substrates. This Cereibacter sphaeroides (strain ATCC 17029 / ATH 2.4.9) (Rhodobacter sphaeroides) protein is DNA-directed RNA polymerase subunit beta'.